Here is a 467-residue protein sequence, read N- to C-terminus: Glutamate--tRNA ligase (467 aa).

Positions 9–19 match the 'HIGH' region motif; that stretch reads PSPTGYLHIGG. Residues 237–241 carry the 'KMSKS' region motif; sequence KLSKR. Lys-240 is a binding site for ATP.

Belongs to the class-I aminoacyl-tRNA synthetase family. Glutamate--tRNA ligase type 1 subfamily. As to quaternary structure, monomer.

Its subcellular location is the cytoplasm. The catalysed reaction is tRNA(Glu) + L-glutamate + ATP = L-glutamyl-tRNA(Glu) + AMP + diphosphate. Functionally, catalyzes the attachment of glutamate to tRNA(Glu) in a two-step reaction: glutamate is first activated by ATP to form Glu-AMP and then transferred to the acceptor end of tRNA(Glu). This is Glutamate--tRNA ligase from Stenotrophomonas maltophilia (strain R551-3).